The primary structure comprises 20 residues: Conotoxin PnMLKM-D0211 (20 aa).

A propeptide spanning residues 1-3 (VKR) is cleaved from the precursor. 3 disulfide bridges follow: Cys-4–Cys-18, Cys-5–Cys-14, and Cys-10–Cys-17. Pro-16 is subject to 4-hydroxyproline. A Tryptophan amide modification is found at Trp-19.

This sequence belongs to the conotoxin M superfamily. In terms of tissue distribution, expressed by the venom duct.

The protein resides in the secreted. This is Conotoxin PnMLKM-D0211 from Conus pennaceus (Feathered cone).